A 479-amino-acid chain; its full sequence is Glycogen synthase (479 aa).

An ADP-alpha-D-glucose-binding site is contributed by K15.

It belongs to the glycosyltransferase 1 family. Bacterial/plant glycogen synthase subfamily.

It catalyses the reaction [(1-&gt;4)-alpha-D-glucosyl](n) + ADP-alpha-D-glucose = [(1-&gt;4)-alpha-D-glucosyl](n+1) + ADP + H(+). Its pathway is glycan biosynthesis; glycogen biosynthesis. In terms of biological role, synthesizes alpha-1,4-glucan chains using ADP-glucose. The protein is Glycogen synthase of Histophilus somni (strain 129Pt) (Haemophilus somnus).